The following is a 374-amino-acid chain: Conserved virulence factor C (374 aa).

It belongs to the CvfC family.

Functionally, required for hemolysin production. Contributes to virulence in both silkworm-infection model and mice. This chain is Conserved virulence factor C (cvfC), found in Staphylococcus aureus (strain NCTC 8325 / PS 47).